A 209-amino-acid chain; its full sequence is NADH-quinone oxidoreductase subunit C (209 aa).

The protein belongs to the complex I 30 kDa subunit family. NDH-1 is composed of 14 different subunits. Subunits NuoB, C, D, E, F, and G constitute the peripheral sector of the complex.

The protein resides in the cell inner membrane. The enzyme catalyses a quinone + NADH + 5 H(+)(in) = a quinol + NAD(+) + 4 H(+)(out). NDH-1 shuttles electrons from NADH, via FMN and iron-sulfur (Fe-S) centers, to quinones in the respiratory chain. The immediate electron acceptor for the enzyme in this species is believed to be ubiquinone. Couples the redox reaction to proton translocation (for every two electrons transferred, four hydrogen ions are translocated across the cytoplasmic membrane), and thus conserves the redox energy in a proton gradient. This Xanthobacter autotrophicus (strain ATCC BAA-1158 / Py2) protein is NADH-quinone oxidoreductase subunit C.